A 411-amino-acid chain; its full sequence is Dual-specificity RNA methyltransferase RlmN (411 aa).

Glu-125 serves as the catalytic Proton acceptor. The Radical SAM core domain occupies 131–380; sequence EEGRGTLCVS…IRTPRGRDIL (250 aa). A disulfide bond links Cys-138 and Cys-383. [4Fe-4S] cluster is bound by residues Cys-145, Cys-149, and Cys-152. S-adenosyl-L-methionine contacts are provided by residues 209-210, Ser-241, 263-265, and Asn-340; these read GE and SLH. Cys-383 acts as the S-methylcysteine intermediate in catalysis.

This sequence belongs to the radical SAM superfamily. RlmN family. It depends on [4Fe-4S] cluster as a cofactor.

Its subcellular location is the cytoplasm. The catalysed reaction is adenosine(2503) in 23S rRNA + 2 reduced [2Fe-2S]-[ferredoxin] + 2 S-adenosyl-L-methionine = 2-methyladenosine(2503) in 23S rRNA + 5'-deoxyadenosine + L-methionine + 2 oxidized [2Fe-2S]-[ferredoxin] + S-adenosyl-L-homocysteine. The enzyme catalyses adenosine(37) in tRNA + 2 reduced [2Fe-2S]-[ferredoxin] + 2 S-adenosyl-L-methionine = 2-methyladenosine(37) in tRNA + 5'-deoxyadenosine + L-methionine + 2 oxidized [2Fe-2S]-[ferredoxin] + S-adenosyl-L-homocysteine. In terms of biological role, specifically methylates position 2 of adenine 2503 in 23S rRNA and position 2 of adenine 37 in tRNAs. m2A2503 modification seems to play a crucial role in the proofreading step occurring at the peptidyl transferase center and thus would serve to optimize ribosomal fidelity. The polypeptide is Dual-specificity RNA methyltransferase RlmN (Brucella anthropi (strain ATCC 49188 / DSM 6882 / CCUG 24695 / JCM 21032 / LMG 3331 / NBRC 15819 / NCTC 12168 / Alc 37) (Ochrobactrum anthropi)).